The chain runs to 348 residues: MGCNFSSQSKLQVPEIRASRSITPASQKSEDPYSHIRLLLLGSAESGKTTVLEQVRLLYKQHFTESEYFHRRAFIYHNIFKSIKALCRAMRMSDIQFADPINMGRAQSIIADEHGHYGLFSKDLAEKIKHIWNDKSMQKLYARRSQFNLNDSASYFLNNIDKINMVDYKPSERDLIMAYVPTCGVQNVIFTACNQSFQLFDIGGQKIDRRKWALQYEGIDAIFFCIAISEYDQVMSEDMVTNRLDDALNLLQSISEDPAFATTPIYLFLNEIDVFCEKLSVIPLSKYKPDFKGGDQDDAIDFMENLACEALGKRDRSLYRVYRCIAIDTQMMAELLSTVFKDIAKRKK.

A lipid anchor (N-myristoyl glycine) is attached at Gly-2. A lipid anchor (S-palmitoyl cysteine) is attached at Cys-3. The region spanning 34 to 348 (SHIRLLLLGS…VFKDIAKRKK (315 aa)) is the G-alpha domain. Residues 37–50 (RLLLLGSAESGKTT) are G1 motif. Residues 42–49 (GSAESGKT), 176–182 (IMAYVPT), 201–205 (DIGGQ), 270–273 (NEID), and Ala-326 contribute to the GTP site. The G2 motif stretch occupies residues 174–182 (DLIMAYVPT). Mg(2+) is bound at residue Thr-182. Positions 197 to 206 (FQLFDIGGQK) are G3 motif. Positions 266-273 (YLFLNEID) are G4 motif. The G5 motif stretch occupies residues 324–329 (CIAIDT).

This sequence belongs to the G-alpha family. G proteins are composed of 3 units; alpha, beta and gamma. The alpha chain contains the guanine nucleotide binding site.

Guanine nucleotide-binding proteins (G proteins) are involved as modulators or transducers in various transmembrane signaling systems. This chain is Guanine nucleotide-binding protein alpha-13 subunit (gpa-13), found in Caenorhabditis elegans.